An 800-amino-acid polypeptide reads, in one-letter code: Phenylalanine--tRNA ligase beta subunit (800 aa).

The region spanning 39 to 154 is the tRNA-binding domain; sequence TKDIKNLVVG…EAQVPGTDAL (116 aa). Residues 408–483 form the B5 domain; sequence AFITPIDITA…RIYGYDDIPS (76 aa). Residues Asp-461, Asp-467, Glu-470, and Glu-471 each contribute to the Mg(2+) site. The region spanning 708–800 is the FDX-ACB domain; it reads PRFPGMSRDI…ALIEQGAVIR (93 aa).

Belongs to the phenylalanyl-tRNA synthetase beta subunit family. Type 1 subfamily. Tetramer of two alpha and two beta subunits. Mg(2+) is required as a cofactor.

The protein resides in the cytoplasm. It carries out the reaction tRNA(Phe) + L-phenylalanine + ATP = L-phenylalanyl-tRNA(Phe) + AMP + diphosphate + H(+). This is Phenylalanine--tRNA ligase beta subunit from Staphylococcus aureus (strain USA300).